A 341-amino-acid polypeptide reads, in one-letter code: 33 kDa chaperonin (341 aa).

Disulfide bonds link C245–C247 and C278–C281.

Belongs to the HSP33 family. Under oxidizing conditions two disulfide bonds are formed involving the reactive cysteines. Under reducing conditions zinc is bound to the reactive cysteines and the protein is inactive.

The protein resides in the cytoplasm. Functionally, redox regulated molecular chaperone. Protects both thermally unfolding and oxidatively damaged proteins from irreversible aggregation. Plays an important role in the bacterial defense system toward oxidative stress. In Thermus thermophilus (strain ATCC 27634 / DSM 579 / HB8), this protein is 33 kDa chaperonin.